Reading from the N-terminus, the 467-residue chain is Serine/threonine-protein kinase AFC1 (467 aa).

A Protein kinase domain is found at 115–443; sequence YQILSKMGEG…AREALNHPFF (329 aa). ATP contacts are provided by residues 121-129 and Lys-144; that span reads MGEGTFGQV. Asp-240 serves as the catalytic Proton acceptor. The disordered stretch occupies residues 447-467; it reads REQSIPPFNPNPHPFLYNQKN.

The protein belongs to the protein kinase superfamily. CMGC Ser/Thr protein kinase family. Lammer subfamily.

The enzyme catalyses L-seryl-[protein] + ATP = O-phospho-L-seryl-[protein] + ADP + H(+). It carries out the reaction L-threonyl-[protein] + ATP = O-phospho-L-threonyl-[protein] + ADP + H(+). It catalyses the reaction L-tyrosyl-[protein] + ATP = O-phospho-L-tyrosyl-[protein] + ADP + H(+). Functionally, activator of yeast transcription factor, STE12. This chain is Serine/threonine-protein kinase AFC1 (AFC1), found in Arabidopsis thaliana (Mouse-ear cress).